The primary structure comprises 284 residues: MVLMIVSGRSGSGKSVALRALEDMGFYCVDNLPVVLLPDLARSLADRNISAAVSIDVRNMPESPEIFEQAMQNLPECFSPQLLFLDADRNTLIRRYSDTRRLHPLSSKNLSLESAIDEESDLLEPLRSRADLIVDTSEMSVHELAEMLRTRLLGKRERELTMVFESFGFKHGIPIDADYVFDVRFLPNPHWDPKLRPMTGLDKPVAAFLDRHTEVHNFIYQTRSYLELWLPMLETNNRSYLTVAIGCTGGKHRSVYIAEQLADYFRSRGKNVQSRHRTLEKRKS.

8–15 (GRSGSGKS) contributes to the ATP binding site. 56–59 (DVRN) contributes to the GTP binding site. The tract at residues 266-284 (RSRGKNVQSRHRTLEKRKS) is RNA-binding.

This sequence belongs to the RapZ-like family. RapZ subfamily. Homotrimer.

In terms of biological role, modulates the synthesis of GlmS, by affecting the processing and stability of the regulatory small RNA GlmZ. When glucosamine-6-phosphate (GlcN6P) concentrations are high in the cell, RapZ binds GlmZ and targets it to cleavage by RNase E. Consequently, GlmZ is inactivated and unable to activate GlmS synthesis. Under low GlcN6P concentrations, RapZ is sequestered and inactivated by an other regulatory small RNA, GlmY, preventing GlmZ degradation and leading to synthesis of GlmS. The sequence is that of RNase adapter protein RapZ from Klebsiella pneumoniae (strain 342).